Here is a 1486-residue protein sequence, read N- to C-terminus: Rap guanine nucleotide exchange factor 2 (1486 aa).

Disordered stretches follow at residues 40-59 and 68-101; these read HVSS…SSSL and SEAG…SDPL. Over residues 83-94 the composition is skewed to acidic residues; the sequence is VDSEDDDDEEDI. Residue 135-252 participates in a nucleoside 3',5'-cyclic phosphate binding; sequence AFANMTMSVR…QKVEEEGEIV (118 aa). The 114-residue stretch at 267–380 folds into the N-terminal Ras-GEF domain; it reads KGHIVIKGTS…RLLNIACAAK (114 aa). One can recognise a PDZ domain in the interval 385 to 468; it reads LMTLTKPARE…LSITVKTNLF (84 aa). At Ser501 the chain carries Phosphoserine. The Ras-associating domain maps to 606–692; the sequence is PDQVLRVFKA…GRYYLKNNME (87 aa). Thr644 carries the post-translational modification Phosphothreonine. The region spanning 717-944 is the Ras-GEF domain; the sequence is STVEVATQLS…SQGSTNATVL (228 aa). 4 positions are modified to phosphoserine: Ser806, Ser930, Ser933, and Ser1022. The interval 1002–1049 is disordered; the sequence is PATNTLPKNPTDKKPVKSETSPVAPRAGLQPKAQPQPQPPQPPHKLNQ. Over residues 1035–1044 the composition is skewed to pro residues; sequence QPQPQPPQPP. A phosphoserine mark is found at Ser1077, Ser1086, Ser1092, Ser1113, Ser1117, Ser1156, and Ser1173. Disordered regions lie at residues 1090–1176, 1221–1254, 1303–1357, and 1391–1486; these read EGSL…SVSI, PSTE…SGSH, KYSR…DSSS, and GRYR…VSAV. Low complexity-rich tracts occupy residues 1105–1122 and 1138–1159; these read SNTS…QSSP and SDSG…SFDS. 2 stretches are compositionally biased toward polar residues: residues 1244-1254 and 1304-1328; these read GSWTSCSSGSH and YSRQ…SSTG. Over residues 1475–1486 the composition is skewed to acidic residues; the sequence is AEEDEDEQVSAV.

Belongs to the RAPGEF2 family. In terms of assembly, found in a complex, at least composed of KIDINS220, MAGI2, NTRK1 and RAPGEF2; the complex is mainly formed at late endosomes in a neuronal growth factor (NGF)-dependent manner. Interacts (via C-terminal domain) with NEDD4 (via WW domains); this interaction leads to ubiquitination and degradation via the proteasome pathway in a cAMP-independent manner. Interacts with MAGI1 (via PDZ domain). Interacts with ADRB1 (via C-terminal PDZ motif); the interaction is direct. Interacts (via Ras-associating domain) with RAP1A (via GTP-bound active form). Interacts weakly with HRAS (via GDP- and GTP-bound forms). Interacts (via C-terminal domain) with MAGI2 (via PDZ and WW domains). Interacts with CDH1 and TJP1. Interacts with CTNNB1. In terms of processing, ubiquitinated by NEDD4, leading to proteasomal degradation. Phosphorylation by PLK2 promotes its activity.

Its subcellular location is the cytoplasm. It is found in the perinuclear region. The protein localises to the cell membrane. It localises to the late endosome. The protein resides in the cell junction. Functions as a guanine nucleotide exchange factor (GEF), which activates Rap and Ras family of small GTPases by exchanging bound GDP for free GTP in a cAMP-dependent manner. Serves as a link between cell surface receptors and Rap/Ras GTPases in intracellular signaling cascades. Also acts as an effector for Rap1 by direct association with Rap1-GTP thereby leading to the amplification of Rap1-mediated signaling. Shows weak activity on HRAS. It is controversial whether RAPGEF2 binds cAMP and cGMP or not. Its binding to ligand-activated beta-1 adrenergic receptor ADRB1 leads to the Ras activation through the G(s)-alpha signaling pathway. Involved in the cAMP-induced Ras and Erk1/2 signaling pathway that leads to sustained inhibition of long term melanogenesis by reducing dendrite extension and melanin synthesis. Also provides inhibitory signals for cell proliferation of melanoma cells and promotes their apoptosis in a cAMP-independent nanner. Regulates cAMP-induced neuritogenesis by mediating the Rap1/B-Raf/ERK signaling through a pathway that is independent on both PKA and RAPGEF3/RAPGEF4. Involved in neuron migration and in the formation of the major forebrain fiber connections forming the corpus callosum, the anterior commissure and the hippocampal commissure during brain development. Involved in neuronal growth factor (NGF)-induced sustained activation of Rap1 at late endosomes and in brain-derived neurotrophic factor (BDNF)-induced axon outgrowth of hippocampal neurons. Plays a role in the regulation of embryonic blood vessel formation and in the establishment of basal junction integrity and endothelial barrier function. May be involved in the regulation of the vascular endothelial growth factor receptor KDR and cadherin CDH5 expression at allantois endothelial cell-cell junctions. Binds to cAMP. The protein is Rap guanine nucleotide exchange factor 2 (RAPGEF2) of Bos taurus (Bovine).